Reading from the N-terminus, the 298-residue chain is ATP phosphoribosyltransferase (298 aa).

The protein belongs to the ATP phosphoribosyltransferase family. Long subfamily. Requires Mg(2+) as cofactor.

It is found in the cytoplasm. The catalysed reaction is 1-(5-phospho-beta-D-ribosyl)-ATP + diphosphate = 5-phospho-alpha-D-ribose 1-diphosphate + ATP. The protein operates within amino-acid biosynthesis; L-histidine biosynthesis; L-histidine from 5-phospho-alpha-D-ribose 1-diphosphate: step 1/9. With respect to regulation, feedback inhibited by histidine. Functionally, catalyzes the condensation of ATP and 5-phosphoribose 1-diphosphate to form N'-(5'-phosphoribosyl)-ATP (PR-ATP). Has a crucial role in the pathway because the rate of histidine biosynthesis seems to be controlled primarily by regulation of HisG enzymatic activity. The polypeptide is ATP phosphoribosyltransferase (Aliivibrio salmonicida (strain LFI1238) (Vibrio salmonicida (strain LFI1238))).